The following is a 585-amino-acid chain: Protein DENND6B (585 aa).

Residues 1–10 (MEVPVGPGPR) are compositionally biased toward low complexity. Positions 1–25 (MEVPVGPGPRQAGGGLGATRSSSSG) are disordered. In terms of domain architecture, uDENN spans 43–221 (ECVCVVTFDL…IQVRIPSRVD (179 aa)). In terms of domain architecture, cDENN spans 246–373 (VHELDLFRCF…VKLKKPSRLK (128 aa)). Residues 375–499 (LDTKPGLYTS…KSPHFDGWYR (125 aa)) enclose the dDENN domain.

This sequence belongs to the DENND6 family.

The protein resides in the recycling endosome. The protein localises to the cytoplasm. Functionally, guanine nucleotide exchange factor (GEF) for RAB14. Also has some, lesser GEF activity towards RAB35. This is Protein DENND6B (Dennd6b) from Mus musculus (Mouse).